The sequence spans 122 residues: Large ribosomal subunit protein uL14 (122 aa).

This sequence belongs to the universal ribosomal protein uL14 family. As to quaternary structure, part of the 50S ribosomal subunit. Forms a cluster with proteins L3 and L19. In the 70S ribosome, L14 and L19 interact and together make contacts with the 16S rRNA in bridges B5 and B8.

Binds to 23S rRNA. Forms part of two intersubunit bridges in the 70S ribosome. This chain is Large ribosomal subunit protein uL14, found in Streptococcus equi subsp. equi (strain 4047).